A 469-amino-acid chain; its full sequence is Glutamate--tRNA ligase (469 aa).

The short motif at 11-21 (PSPTGFIHLGN) is the 'HIGH' region element. The segment covering 121–131 (PRYDGTWRPEP) has biased composition (basic and acidic residues). The interval 121–141 (PRYDGTWRPEPGKVLPEPPPG) is disordered. The 'KMSKS' region signature appears at 243–247 (KMSKR). Residue Lys-246 coordinates ATP.

This sequence belongs to the class-I aminoacyl-tRNA synthetase family. Glutamate--tRNA ligase type 1 subfamily. Monomer.

It is found in the cytoplasm. It catalyses the reaction tRNA(Glu) + L-glutamate + ATP = L-glutamyl-tRNA(Glu) + AMP + diphosphate. Catalyzes the attachment of glutamate to tRNA(Glu) in a two-step reaction: glutamate is first activated by ATP to form Glu-AMP and then transferred to the acceptor end of tRNA(Glu). This is Glutamate--tRNA ligase from Burkholderia multivorans (strain ATCC 17616 / 249).